Here is a 339-residue protein sequence, read N- to C-terminus: DNA-directed RNA polymerase subunit alpha (339 aa).

The interval 1–233 (MVREKVRIST…DLFIPFLHAE (233 aa)) is alpha N-terminal domain (alpha-NTD). Residues 267 to 339 (IALKSIFIDQ…FTINLPKNKF (73 aa)) form an alpha C-terminal domain (alpha-CTD) region.

This sequence belongs to the RNA polymerase alpha chain family. In plastids the minimal PEP RNA polymerase catalytic core is composed of four subunits: alpha, beta, beta', and beta''. When a (nuclear-encoded) sigma factor is associated with the core the holoenzyme is formed, which can initiate transcription.

It localises to the plastid. The protein resides in the chloroplast. The catalysed reaction is RNA(n) + a ribonucleoside 5'-triphosphate = RNA(n+1) + diphosphate. DNA-dependent RNA polymerase catalyzes the transcription of DNA into RNA using the four ribonucleoside triphosphates as substrates. This chain is DNA-directed RNA polymerase subunit alpha, found in Populus alba (White poplar).